The primary structure comprises 416 residues: Cysteate synthase (416 aa).

Lys104 carries the N6-(pyridoxal phosphate)lysine modification. Pyridoxal 5'-phosphate is bound at residue Asn130.

This sequence belongs to the threonine synthase family. Cysteate synthase subfamily. As to quaternary structure, homotrimer. The cofactor is pyridoxal 5'-phosphate.

The enzyme catalyses O-phospho-L-serine + sulfite + H(+) = L-cysteate + phosphate. It participates in cofactor biosynthesis; coenzyme M biosynthesis. Its activity is regulated as follows. Is inhibited by AP3 (DL-2-amino-3-phosphonopropionate) and, to a lesser extent, by L-aspartate or AP4 (DL-2-amino-4-phosphonobutyrate). Is also inhibited by EDTA in vitro. In terms of biological role, specifically catalyzes the beta-elimination of phosphate from L-phosphoserine and the beta-addition of sulfite to the dehydroalanine intermediate to produce L-cysteate. Does not display threonine synthase activity like the paralog protein ThrC. This chain is Cysteate synthase, found in Methanosarcina acetivorans (strain ATCC 35395 / DSM 2834 / JCM 12185 / C2A).